Here is a 578-residue protein sequence, read N- to C-terminus: Probable arginine--tRNA ligase, mitochondrial (578 aa).

Residues 1 to 16 constitute a mitochondrion transit peptide; sequence MACGFRRAIACQLSRV. L-arginine-binding positions include 133–135, His144, Tyr322, Asp326, and Gln350; that span reads SPN. Residues 133–144 carry the 'HIGH' region motif; sequence SPNVAKKFHVGH. An N6-acetyllysine modification is found at Lys568.

Belongs to the class-I aminoacyl-tRNA synthetase family.

The protein resides in the mitochondrion membrane. The catalysed reaction is tRNA(Arg) + L-arginine + ATP = L-arginyl-tRNA(Arg) + AMP + diphosphate. Catalyzes the attachment of arginine to tRNA(Arg) in a two-step reaction: arginine is first activated by ATP to form Arg-AMP and then transferred to the acceptor end of tRNA(Arg). In Homo sapiens (Human), this protein is Probable arginine--tRNA ligase, mitochondrial (RARS2).